The chain runs to 193 residues: Imidazoleglycerol-phosphate dehydratase (193 aa).

This sequence belongs to the imidazoleglycerol-phosphate dehydratase family.

It is found in the cytoplasm. The catalysed reaction is D-erythro-1-(imidazol-4-yl)glycerol 3-phosphate = 3-(imidazol-4-yl)-2-oxopropyl phosphate + H2O. The protein operates within amino-acid biosynthesis; L-histidine biosynthesis; L-histidine from 5-phospho-alpha-D-ribose 1-diphosphate: step 6/9. The chain is Imidazoleglycerol-phosphate dehydratase from Saccharolobus islandicus (strain Y.G.57.14 / Yellowstone #1) (Sulfolobus islandicus).